The sequence spans 540 residues: Methionine--tRNA ligase 1 (540 aa).

The 'HIGH' region signature appears at 10–20 (PYANGSLHLGH). Cys-141, Cys-144, Cys-153, and Cys-156 together coordinate Zn(2+). Residues 327–331 (KISTS) carry the 'KMSKS' region motif. Thr-330 is a binding site for ATP.

It belongs to the class-I aminoacyl-tRNA synthetase family. MetG type 1 subfamily. In terms of assembly, monomer. Zn(2+) serves as cofactor.

It localises to the cytoplasm. The enzyme catalyses tRNA(Met) + L-methionine + ATP = L-methionyl-tRNA(Met) + AMP + diphosphate. In terms of biological role, is required not only for elongation of protein synthesis but also for the initiation of all mRNA translation through initiator tRNA(fMet) aminoacylation. In Alkaliphilus oremlandii (strain OhILAs) (Clostridium oremlandii (strain OhILAs)), this protein is Methionine--tRNA ligase 1.